The primary structure comprises 1073 residues: Semaphorin-6D (1073 aa).

The N-terminal stretch at 1–20 is a signal peptide; sequence MGFLLLWFCVLFLLVSRLRA. The Extracellular portion of the chain corresponds to 21-662; that stretch reads VSFPEDDEPL…GESNQMVHMN (642 aa). Residues 27–512 enclose the Sema domain; the sequence is DEPLNTVDYH…FSSCVVRIPL (486 aa). An N-linked (GlcNAc...) asparagine glycan is attached at Asn51. Disulfide bonds link Cys108–Cys118, Cys136–Cys145, Cys259–Cys370, and Cys284–Cys329. Residue Asn283 is glycosylated (N-linked (GlcNAc...) asparagine). N-linked (GlcNAc...) asparagine glycosylation is found at Asn435 and Asn461. 4 cysteine pairs are disulfide-bonded: Cys477–Cys506, Cys515–Cys533, Cys521–Cys568, and Cys525–Cys541. The PSI domain maps to 514–569; it reads RCERYGSCKKSCIASRDPYCGWLSQGVCERVTLGMLPGGYEQDTEYGNTAHLGDCH. Asn631 is a glycosylation site (N-linked (GlcNAc...) asparagine). Residues 663–683 form a helical membrane-spanning segment; that stretch reads VLITCVFAAFVLGAFIAGVAV. Residues 684–1073 lie on the Cytoplasmic side of the membrane; sequence YCYRDMFVRK…SVRPLNKYTY (390 aa). A phosphoserine mark is found at Ser723, Ser734, and Ser744. 4 disordered regions span residues 745 to 825, 839 to 876, 919 to 986, and 1021 to 1073; these read RKEL…GHIP, TSFSNSNAHKAEKKLQSMDHPLTKSSSKREHRRSVDSR, PPKV…SPNG, and LQPS…KYTY. Residue Thr773 is modified to Phosphothreonine. Positions 790 to 806 are enriched in basic and acidic residues; it reads SHSEKAHSHGASRKEHP. 3 positions are modified to phosphoserine: Ser931, Ser957, and Ser983. The span at 931–942 shows a compositional bias: polar residues; sequence SPPSTLPRNSPT. Polar residues-rich tracts occupy residues 1021 to 1037 and 1059 to 1073; these read LQPSLSRQSSYTSNGTL and VPQTTSVRPLNKYTY.

This sequence belongs to the semaphorin family. In terms of tissue distribution, expressed in brain and lung.

Its subcellular location is the cell membrane. In terms of biological role, shows growth cone collapsing activity on dorsal root ganglion (DRG) neurons in vitro. May be a stop signal for the DRG neurons in their target areas, and possibly also for other neurons. May also be involved in the maintenance and remodeling of neuronal connections. Ligand of TREM2 with PLXNA1 as coreceptor in dendritic cells, plays a role in the generation of immune responses and skeletal homeostasis. In Mus musculus (Mouse), this protein is Semaphorin-6D (Sema6d).